A 435-amino-acid polypeptide reads, in one-letter code: MSTGFFGDIQKVKYEGPDSDSPLAFRHYNPDEIVLGKRMEDHLRFAVAYWHSFAWEGGDPFGGRTFDRPWYSNELDAAKLKADVAFEFFSLLGAPYYCFHDADVRPEGRNFAENTRYLNEIVDIFEKKQAETGVKLLWGTANLFSNRRYMGGAATNPDPDVFAFAAATVKSCIDATKRLGGENYVLWGGREGYETLLNTDLGRELDQMGRFLNLVVEYKHKIGFKGTILIEPKPQEPTKHQYDYDVATVYGFLKRYGLESEVKVNIEQGHAILAGHSFEHELALARALGIFGSIDMNRNDYQSGWDTDQFPNNVPEMALAYYQVLLAGGFTTGGTNFDAKLRRQSLDPQDLLIGHIGGMDCCARGLKAAAAMLEDGALSKPLDERYAGWNGDFGKKLLTGLSLDQITAEVETKDINPQPKSGRQEYLENVVNRYV.

Residues His-100 and Asp-103 contribute to the active site. Glu-231, Glu-267, His-270, Asp-295, Asp-306, Asp-308, and Asp-338 together coordinate Mg(2+).

Belongs to the xylose isomerase family. As to quaternary structure, homotetramer. Requires Mg(2+) as cofactor.

It is found in the cytoplasm. The enzyme catalyses alpha-D-xylose = alpha-D-xylulofuranose. The chain is Xylose isomerase from Brucella anthropi (strain ATCC 49188 / DSM 6882 / CCUG 24695 / JCM 21032 / LMG 3331 / NBRC 15819 / NCTC 12168 / Alc 37) (Ochrobactrum anthropi).